A 98-amino-acid chain; its full sequence is Large ribosomal subunit protein bL28 (98 aa).

This sequence belongs to the bacterial ribosomal protein bL28 family.

The chain is Large ribosomal subunit protein bL28 from Mesorhizobium japonicum (strain LMG 29417 / CECT 9101 / MAFF 303099) (Mesorhizobium loti (strain MAFF 303099)).